Reading from the N-terminus, the 432-residue chain is Adenylosuccinate synthetase (432 aa).

GTP-binding positions include 13 to 19 (GDEGKGK) and 41 to 43 (GHT). Asp-14 (proton acceptor) is an active-site residue. The Mg(2+) site is built by Asp-14 and Gly-41. Residues 14-17 (DEGK), 39-42 (NAGH), Thr-130, Arg-144, Gln-225, Thr-240, and Arg-304 contribute to the IMP site. His-42 serves as the catalytic Proton donor. Residue 300–306 (ATTGRRR) participates in substrate binding. Residues Arg-306, 332 to 334 (KLD), and 415 to 417 (STG) contribute to the GTP site.

It belongs to the adenylosuccinate synthetase family. As to quaternary structure, homodimer. Requires Mg(2+) as cofactor.

The protein localises to the cytoplasm. It catalyses the reaction IMP + L-aspartate + GTP = N(6)-(1,2-dicarboxyethyl)-AMP + GDP + phosphate + 2 H(+). It functions in the pathway purine metabolism; AMP biosynthesis via de novo pathway; AMP from IMP: step 1/2. Functionally, plays an important role in the de novo pathway of purine nucleotide biosynthesis. Catalyzes the first committed step in the biosynthesis of AMP from IMP. The sequence is that of Adenylosuccinate synthetase from Citrobacter koseri (strain ATCC BAA-895 / CDC 4225-83 / SGSC4696).